The primary structure comprises 1159 residues: WASH complex subunit 5 (1159 aa).

The residue at position 917 (serine 917) is a Phosphoserine.

This sequence belongs to the strumpellin family. In terms of assembly, component of the WASH core complex also described as WASH regulatory complex (SHRC) composed of WASH (WASHC1, WASH2P or WASH3P), WASHC2 (WASHC2A or WASHC2C), WASHC3, WASHC4 and WASHC5. The WASH core complex associates via WASHC2 with the F-actin-capping protein dimer (formed by CAPZA1, CAPZA2 or CAPZA3 and CAPZB) in a transient or substoichiometric manner which was initially described as WASH complex. Interacts with VCP, PI4K2A. In terms of tissue distribution, expressed ubiquitously.

The protein localises to the cytoplasm. It localises to the cytosol. Its subcellular location is the endoplasmic reticulum. The protein resides in the early endosome. In terms of biological role, acts as a component of the WASH core complex that functions as a nucleation-promoting factor (NPF) at the surface of endosomes, where it recruits and activates the Arp2/3 complex to induce actin polymerization, playing a key role in the fission of tubules that serve as transport intermediates during endosome sorting. May be involved in axonal outgrowth. Involved in cellular localization of ADRB2. Involved in cellular trafficking of BLOC-1 complex cargos such as ATP7A and VAMP7. In Homo sapiens (Human), this protein is WASH complex subunit 5.